Reading from the N-terminus, the 362-residue chain is Chorismate synthase (362 aa).

The disordered stretch occupies residues Ala-39 to Arg-59. NADP(+)-binding residues include Arg-48 and Arg-54. Residues Arg-125–Ser-127, Asn-238–Ala-239, Gly-278, Lys-293–Ser-297, and Arg-319 contribute to the FMN site.

This sequence belongs to the chorismate synthase family. In terms of assembly, homotetramer. Requires FMNH2 as cofactor.

The catalysed reaction is 5-O-(1-carboxyvinyl)-3-phosphoshikimate = chorismate + phosphate. The protein operates within metabolic intermediate biosynthesis; chorismate biosynthesis; chorismate from D-erythrose 4-phosphate and phosphoenolpyruvate: step 7/7. Catalyzes the anti-1,4-elimination of the C-3 phosphate and the C-6 proR hydrogen from 5-enolpyruvylshikimate-3-phosphate (EPSP) to yield chorismate, which is the branch point compound that serves as the starting substrate for the three terminal pathways of aromatic amino acid biosynthesis. This reaction introduces a second double bond into the aromatic ring system. This chain is Chorismate synthase, found in Aeromonas hydrophila subsp. hydrophila (strain ATCC 7966 / DSM 30187 / BCRC 13018 / CCUG 14551 / JCM 1027 / KCTC 2358 / NCIMB 9240 / NCTC 8049).